Consider the following 80-residue polypeptide: Cortexin-3 (80 aa).

A helical membrane pass occupies residues 28 to 48; it reads TTFVFVILLFIFLGILIVRCF.

Belongs to the cortexin family.

Its subcellular location is the membrane. The sequence is that of Cortexin-3 (Ctxn3) from Mus musculus (Mouse).